The following is a 618-amino-acid chain: Dihydroxy-acid dehydratase (618 aa).

D81 lines the Mg(2+) pocket. C122 is a [2Fe-2S] cluster binding site. Mg(2+)-binding residues include D123 and K124. Residue K124 is modified to N6-carboxylysine. A [2Fe-2S] cluster-binding site is contributed by C195. E491 serves as a coordination point for Mg(2+). Catalysis depends on S517, which acts as the Proton acceptor.

It belongs to the IlvD/Edd family. In terms of assembly, homodimer. [2Fe-2S] cluster serves as cofactor. It depends on Mg(2+) as a cofactor.

It catalyses the reaction (2R)-2,3-dihydroxy-3-methylbutanoate = 3-methyl-2-oxobutanoate + H2O. It carries out the reaction (2R,3R)-2,3-dihydroxy-3-methylpentanoate = (S)-3-methyl-2-oxopentanoate + H2O. It functions in the pathway amino-acid biosynthesis; L-isoleucine biosynthesis; L-isoleucine from 2-oxobutanoate: step 3/4. The protein operates within amino-acid biosynthesis; L-valine biosynthesis; L-valine from pyruvate: step 3/4. Functions in the biosynthesis of branched-chain amino acids. Catalyzes the dehydration of (2R,3R)-2,3-dihydroxy-3-methylpentanoate (2,3-dihydroxy-3-methylvalerate) into 2-oxo-3-methylpentanoate (2-oxo-3-methylvalerate) and of (2R)-2,3-dihydroxy-3-methylbutanoate (2,3-dihydroxyisovalerate) into 2-oxo-3-methylbutanoate (2-oxoisovalerate), the penultimate precursor to L-isoleucine and L-valine, respectively. The chain is Dihydroxy-acid dehydratase from Rhodopseudomonas palustris (strain TIE-1).